A 390-amino-acid polypeptide reads, in one-letter code: Two-component response regulator ORR29 (390 aa).

The region spanning 13–130 is the Response regulatory domain; sequence SAMVIDEDKC…TIKNLWQYVD (118 aa). D65 carries the post-translational modification 4-aspartylphosphate. Residues 169–226 constitute a DNA-binding region (myb-like GARP); it reads KKYYLMWTPHLQKKFLHALQILGKDASPKNIKKIMGVDNIDCRQIAAHLQKHRLRLTK. 2 disordered regions span residues 233 to 271 and 303 to 339; these read FTTDTSKDESNSRIGPAESHHVCRNASTLQPRSNTQPTE and SKHSSDPSGDEDEQVVVGGDQDGCANEANDIDSSGDH. Over residues 257 to 271 the composition is skewed to polar residues; the sequence is NASTLQPRSNTQPTE.

The protein belongs to the ARR family. Type-B subfamily. Two-component system major event consists of a His-to-Asp phosphorelay between a sensor histidine kinase (HK) and a response regulator (RR). In plants, the His-to-Asp phosphorelay involves an additional intermediate named Histidine-containing phosphotransfer protein (HPt). This multistep phosphorelay consists of a His-Asp-His-Asp sequential transfer of a phosphate group between first a His and an Asp of the HK protein, followed by the transfer to a conserved His of the HPt protein and finally the transfer to an Asp in the receiver domain of the RR protein.

The protein localises to the cytoplasm. Its subcellular location is the cytosol. It is found in the nucleus. Its function is as follows. Transcriptional activator that binds specific DNA sequence. Functions as a response regulator involved in His-to-Asp phosphorelay signal transduction system. Phosphorylation of the Asp residue in the receiver domain activates the ability of the protein to promote the transcription of target genes. May directly activate some type-A response regulators in response to cytokinins. Functions as a response regulator in response to cytokinins. This is Two-component response regulator ORR29 from Oryza sativa subsp. japonica (Rice).